The sequence spans 261 residues: Calbindin (261 aa).

At alanine 2 the chain carries N-acetylalanine. Residues 2–7 (AESHLQ) are interaction with RANBP9. EF-hand domains are found at residues 11-46 (ITAS…LQQA), 53-88 (ELSP…EENF), 98-133 (KSCE…LLEK), 142-177 (KLAE…QENF), and 186-221 (MCGK…LCEK). 5 residues coordinate Ca(2+): aspartate 24, aspartate 26, serine 28, tyrosine 30, and glutamate 35. Residues aspartate 111, aspartate 113, glutamate 122, aspartate 155, asparagine 157, aspartate 159, lysine 161, glutamate 166, aspartate 199, aspartate 201, asparagine 203, tyrosine 205, and glutamate 210 each contribute to the Ca(2+) site.

It belongs to the calbindin family. As to quaternary structure, interacts with RANBP9.

Its function is as follows. Buffers cytosolic calcium. May stimulate a membrane Ca(2+)-ATPase and a 3',5'-cyclic nucleotide phosphodiesterase. This chain is Calbindin (CALB1), found in Pongo abelii (Sumatran orangutan).